A 206-amino-acid polypeptide reads, in one-letter code: ATP-dependent dethiobiotin synthetase BioD (206 aa).

12–17 (GVGKTI) contacts ATP. T16 is a Mg(2+) binding site. K32 is an active-site residue. The Mg(2+) site is built by H46 and E98. 98–101 (EGAG) contributes to the ATP binding site.

This sequence belongs to the dethiobiotin synthetase family. In terms of assembly, homodimer. Requires Mg(2+) as cofactor.

It is found in the cytoplasm. It catalyses the reaction (7R,8S)-7,8-diammoniononanoate + CO2 + ATP = (4R,5S)-dethiobiotin + ADP + phosphate + 3 H(+). The protein operates within cofactor biosynthesis; biotin biosynthesis; biotin from 7,8-diaminononanoate: step 1/2. Catalyzes a mechanistically unusual reaction, the ATP-dependent insertion of CO2 between the N7 and N8 nitrogen atoms of 7,8-diaminopelargonic acid (DAPA, also called 7,8-diammoniononanoate) to form a ureido ring. The sequence is that of ATP-dependent dethiobiotin synthetase BioD from Novosphingobium aromaticivorans (strain ATCC 700278 / DSM 12444 / CCUG 56034 / CIP 105152 / NBRC 16084 / F199).